The primary structure comprises 204 residues: Ribosomal RNA small subunit methyltransferase G (204 aa).

S-adenosyl-L-methionine contacts are provided by Gly-73, Phe-78, and Arg-139.

Belongs to the methyltransferase superfamily. RNA methyltransferase RsmG family.

It is found in the cytoplasm. The catalysed reaction is guanosine(527) in 16S rRNA + S-adenosyl-L-methionine = N(7)-methylguanosine(527) in 16S rRNA + S-adenosyl-L-homocysteine. Its function is as follows. Specifically methylates the N7 position of guanine in position 527 of 16S rRNA. This Coxiella burnetii (strain Dugway 5J108-111) protein is Ribosomal RNA small subunit methyltransferase G.